Here is a 759-residue protein sequence, read N- to C-terminus: Secretin XpsD (759 aa).

The signal sequence occupies residues 1–21; it reads MSERMTPRLFPVSLLIGLLAG. A lipid anchor (N-palmitoyl cysteine) is attached at Cys-22. Cys-22 carries the S-diacylglycerol cysteine lipid modification. Low complexity predominate over residues 40–51; it reads VGAAGATQTTAE. Residues 40–69 are disordered; it reads VGAAGATQTTAEQRADGNASAKPTPVIRRG. An N0 region spans residues 92 to 187; that stretch reads GSATFNFEGE…APSTASPSAA (96 aa). The segment at 189-253 is N1; sequence GFEVRVVPLK…VQIFDVDWLS (65 aa). Positions 254–323 are N2; it reads GMSVGVFPIQ…IQQWLDRIDS (70 aa). The segment at 326–474 is N3; it reads GGVRLFSYEL…SIRDVIEKLD (149 aa). The disordered stretch occupies residues 352-434; the sequence is GGRGNGGNSG…PPSTNQNGSV (83 aa). The span at 392 to 401 shows a compositional bias: gly residues; sequence ATGGDIGGTS. Polar residues predominate over residues 425 to 434; that stretch reads PPSTNQNGSV. The segment at 479–734 is secretin; that stretch reads QVHIEAQIAE…VLITPSIVRN (256 aa). The interval 736–759 is s domain; that stretch reads QDARDLTDEYGSKFKSMRPMDVHK.

This sequence belongs to the bacterial secretin family. GSP D subfamily. In terms of assembly, forms a cylindrical channel with 15 subunits. Binds to XpsN.

It localises to the cell outer membrane. Functionally, involved in a type II secretion system (T2SS, formerly general secretion pathway, GSP) for the export of proteins. This subunit forms the outer membrane channel. This is Secretin XpsD (xpsD) from Xanthomonas campestris pv. campestris (strain ATCC 33913 / DSM 3586 / NCPPB 528 / LMG 568 / P 25).